The following is a 605-amino-acid chain: F-box/WD repeat-containing protein 1A (605 aa).

The interval 128 to 177 (ASYEKEKELCVKYFEQWSESDQVEFVEHLISQMCHYQHGHINSYLKPMLQ) is homodimerization domain D. The 39-residue stretch at 190–228 (DHIAENILSYLDAKSLCAAELVCKEWYRVTSDGMLWKKL) folds into the F-box domain. The segment at 190–228 (DHIAENILSYLDAKSLCAAELVCKEWYRVTSDGMLWKKL) is required for down-regulation of SNAI1. WD repeat units follow at residues 301–338 (ETSK…CKRI), 341–378 (GHTG…MLNT), 381–418 (HHCE…DITL), 424–461 (GHRA…FVRT), 464–503 (GHKR…RVLE), 505–541 (HEEL…DPRA), and 553–590 (EHSG…AAQA).

In terms of assembly, homodimer. Self-associates. Component of the SCF(BTRC) complex formed of CUL1, SKP1, RBX1 and a BTRC dimer. Direct interaction with SKP1 occurs via the F-box domain. Interacts with phosphorylated ubiquitination substrates SMAD3 and SMAD4. Interacts with phosphorylated ubiquitination substrates CTNNB1, NFKBIA, NFKBIB, NFKBIE, NFKB1/nuclear factor NF-kappa-B p105 subunit, ATF4, CDC25A, DLG1, FBXO5 and SNAI1; the interaction requires the phosphorylation of the 2 serine residues in the substrate destruction motif D-S-G-X(2,3,4)-S. Binds UBQLN1. Interacts with CDC34 and UBE2R2. Interacts with FBXW11. Interacts with CUL4A and DDB1. Part of a SCF(BTRC)-like complex lacking CUL1, which is associated with phosphorylated NKBIA and RELA; RELA interacts directly with NFKBIA. Interacts with the phosphorylated form of GLI3. Interacts with CLU. Interacts with PER1 (phosphorylated), PER2 (phosphorylated) and PER3. Interacts with phosphorylated ubiquitination substrate CEP68. Interacts with ZC3H12A; this interaction occurs when ZC3H12A is phosphorylated in a IKBKB/IKKB-dependent manner. Interacts with HSF1; this interaction occurs during mitosis and induces HSF1 ubiquitin-dependent degradation, a process inhibited by CDC20. Interacts with NFE2L1. Interacts with INAVA. Interacts with IL10RA; this interaction leads to IL10RA ubiquitination and subsequent degradation. Interacts with REST. Interacts with KLF4; this interaction leads to KLF4 ubiquitination and subsequent degradation. Interacts with UBR2, as part of a SCF(BTRC) complex; the interaction mediates 'Lys-48'-linked ubiquitination of UBR2 and is regulated by DUSP22 in the T-cell receptor signaling pathway. As to quaternary structure, (Microbial infection) Interacts with vaccinia virus A49; this interaction inhibits NF-kappa-B activation. (Microbial infection) Interacts with HIV-1 Vpu. In terms of processing, ubiquitinated. Deubiquitinated by OTUD5, promoting its stability. Expressed in epididymis (at protein level).

The protein resides in the cytoplasm. It localises to the nucleus. It functions in the pathway protein modification; protein ubiquitination. Functionally, substrate recognition component of a SCF (SKP1-CUL1-F-box protein) E3 ubiquitin-protein ligase complex which mediates the ubiquitination and subsequent proteasomal degradation of target proteins. Recognizes and binds to phosphorylated target proteins. SCF(BTRC) mediates the ubiquitination of CTNNB1 and participates in Wnt signaling. SCF(BTRC) mediates the ubiquitination of phosphorylated NFKB1, ATF4, CDC25A, DLG1, FBXO5, PER1, SMAD3, SMAD4, SNAI1 and probably NFKB2. SCF(BTRC) mediates the ubiquitination of NFKBIA, NFKBIB and NFKBIE; the degradation frees the associated NFKB1 to translocate into the nucleus and to activate transcription. Ubiquitination of NFKBIA occurs at 'Lys-21' and 'Lys-22'. The SCF(FBXW11) complex also regulates NF-kappa-B by mediating ubiquitination of phosphorylated NFKB1: specifically ubiquitinates the p105 form of NFKB1, leading to its degradation. SCF(BTRC) mediates the ubiquitination of CEP68; this is required for centriole separation during mitosis. SCF(BTRC) mediates the ubiquitination and subsequent degradation of nuclear NFE2L1. Has an essential role in the control of the clock-dependent transcription via degradation of phosphorylated PER1 and PER2. May be involved in ubiquitination and subsequent proteasomal degradation through a DBB1-CUL4 E3 ubiquitin-protein ligase. Required for activation of NFKB-mediated transcription by IL1B, MAP3K14, MAP3K1, IKBKB and TNF. Required for proteolytic processing of GLI3. Mediates ubiquitination of REST, thereby leading to its proteasomal degradation. SCF(BTRC) mediates the ubiquitination and subsequent proteasomal degradation of KLF4; thereby negatively regulating cell pluripotency maintenance and embryogenesis. SCF(BTRC) acts as a regulator of mTORC1 signaling pathway by catalyzing ubiquitination and subsequent proteasomal degradation of phosphorylated DEPTOR, TFE3 and MITF. SCF(BTRC) directs 'Lys-48'-linked ubiquitination of UBR2 in the T-cell receptor signaling pathway. The polypeptide is F-box/WD repeat-containing protein 1A (BTRC) (Homo sapiens (Human)).